A 63-amino-acid polypeptide reads, in one-letter code: 2-hydroxymuconate tautomerase (63 aa).

Residue P2 is the Proton acceptor; via imino nitrogen of the active site.

Belongs to the 4-oxalocrotonate tautomerase family. As to quaternary structure, homohexamer.

It carries out the reaction (2Z,4E)-2-hydroxyhexa-2,4-dienedioate = (3E)-2-oxohex-3-enedioate. It functions in the pathway xenobiotic degradation; toluene degradation. Its pathway is xenobiotic degradation; xylene degradation. Catalyzes the ketonization of 2-hydroxymuconate stereoselectively to yield 2-oxo-3-hexenedioate. This Pseudomonas putida (Arthrobacter siderocapsulatus) protein is 2-hydroxymuconate tautomerase (xylH).